The sequence spans 533 residues: Acid-sensing ion channel 2 (533 aa).

Positions 1-16 (MDLKEACGSEASRETE) are enriched in basic and acidic residues. The disordered stretch occupies residues 1–23 (MDLKEACGSEASRETESGGMGSL). The Cytoplasmic segment spans residues 1–68 (MDLKEACGSE…STSRRLLWSA (68 aa)). The helical transmembrane segment at 69–89 (ALLASLVLLVLESTERLAYFL) threads the bilayer. Residues 90-445 (SYPHVTSVDA…ETIEQKKAYE (356 aa)) lie on the Extracellular side of the membrane. Disulfide bonds link Cys-113/Cys-214, Cys-310/Cys-385, Cys-328/Cys-381, Cys-332/Cys-379, Cys-341/Cys-363, and Cys-343/Cys-355. Asn-163 is a glycosylation site (N-linked (GlcNAc...) asparagine). 2 N-linked (GlcNAc...) asparagine glycosylation sites follow: Asn-386 and Asn-413. A helical transmembrane segment spans residues 446 to 466 (VAGLLGDIGGQMGLFIGASIL). A GAS motif; ion selectivity filter motif is present at residues 462–464 (GAS). Topologically, residues 467 to 533 (TLLELFDYAY…TLGTLEEIAC (67 aa)) are cytoplasmic.

This sequence belongs to the amiloride-sensitive sodium channel (TC 1.A.6) family. ASIC2 subfamily. In terms of assembly, can form homotrimers; probably non-functional. Heterotrimer; could form functional heterotrimers producing channel with specific properties depending on their composition. As to expression, expressed in central nervous system.

Its subcellular location is the cell membrane. It catalyses the reaction Na(+)(in) = Na(+)(out). Its activity is regulated as follows. Inhibited by the diuretic drug amiloride. Could form pH-gated heterotrimeric sodium channels that act as postsynaptic excitatory sensors in the nervous system, generating rapid, transient inward currents that fully desensitize upon extracellular acidification. In Danio rerio (Zebrafish), this protein is Acid-sensing ion channel 2 (asic2).